Consider the following 66-residue polypeptide: Large ribosomal subunit protein bL33c (66 aa).

It belongs to the bacterial ribosomal protein bL33 family.

The protein resides in the plastid. It is found in the chloroplast. This is Large ribosomal subunit protein bL33c from Carica papaya (Papaya).